A 69-amino-acid polypeptide reads, in one-letter code: Putative membrane protein insertion efficiency factor (69 aa).

The protein belongs to the UPF0161 family.

The protein resides in the cell membrane. In terms of biological role, could be involved in insertion of integral membrane proteins into the membrane. This Clostridium botulinum (strain ATCC 19397 / Type A) protein is Putative membrane protein insertion efficiency factor.